The sequence spans 88 residues: Small ribosomal subunit protein bS20 (88 aa).

Residues 1–25 form a disordered region; the sequence is MANSPQAKKRARQNERRAEVNKARR. Basic and acidic residues predominate over residues 12–22; it reads RQNERRAEVNK.

The protein belongs to the bacterial ribosomal protein bS20 family.

Functionally, binds directly to 16S ribosomal RNA. This chain is Small ribosomal subunit protein bS20, found in Dinoroseobacter shibae (strain DSM 16493 / NCIMB 14021 / DFL 12).